Consider the following 72-residue polypeptide: Exodeoxyribonuclease 7 small subunit (72 aa).

This sequence belongs to the XseB family. In terms of assembly, heterooligomer composed of large and small subunits.

The protein resides in the cytoplasm. It carries out the reaction Exonucleolytic cleavage in either 5'- to 3'- or 3'- to 5'-direction to yield nucleoside 5'-phosphates.. In terms of biological role, bidirectionally degrades single-stranded DNA into large acid-insoluble oligonucleotides, which are then degraded further into small acid-soluble oligonucleotides. The polypeptide is Exodeoxyribonuclease 7 small subunit (Chlamydia trachomatis serovar D (strain ATCC VR-885 / DSM 19411 / UW-3/Cx)).